The following is a 131-amino-acid chain: Bacteriohemerythrin (131 aa).

Fe cation-binding residues include histidine 22, histidine 58, glutamate 62, histidine 77, histidine 81, histidine 117, and aspartate 122.

The protein belongs to the hemerythrin family. In terms of assembly, monomer.

In terms of biological role, oxygen-binding protein. May be involved in a storage mechanism or for delivery to oxygen-requiring enzymes. The oxygen-binding site contains two iron atoms. This chain is Bacteriohemerythrin, found in Methylococcus capsulatus (strain ATCC 33009 / NCIMB 11132 / Bath).